Consider the following 546-residue polypeptide: Hydroxylamine reductase (546 aa).

4 residues coordinate [4Fe-4S] cluster: cysteine 3, cysteine 6, cysteine 18, and cysteine 25. Residues histidine 245, glutamate 269, cysteine 313, cysteine 401, cysteine 429, cysteine 454, glutamate 488, and lysine 490 each coordinate hybrid [4Fe-2O-2S] cluster. Cysteine 401 is modified (cysteine persulfide).

Belongs to the HCP family. It depends on [4Fe-4S] cluster as a cofactor. The cofactor is hybrid [4Fe-2O-2S] cluster.

It localises to the cytoplasm. It carries out the reaction A + NH4(+) + H2O = hydroxylamine + AH2 + H(+). Inhibited by cyanide and by sulfide and iron reagents such as dithioerythritol, 2,2'-dipyridyl and o-phenanthroline. Could be involved in assimilation and/or detoxification of hydroxylamine, which is a toxic compound that may be formed during nitrate/nitrite assimilation. Catalyzes the reduction of hydroxylamine to form NH(3) and H(2)O. It has a low reductase activity with FAD, FMN, benzyl viologen and bromphenol blue as electrons donors, but it is not able to use NAD or NADP. This is Hydroxylamine reductase from Rhodobacter capsulatus (Rhodopseudomonas capsulata).